We begin with the raw amino-acid sequence, 165 residues long: Large ribosomal subunit protein uL10 (165 aa).

Belongs to the universal ribosomal protein uL10 family. Part of the ribosomal stalk of the 50S ribosomal subunit. The N-terminus interacts with L11 and the large rRNA to form the base of the stalk. The C-terminus forms an elongated spine to which L12 dimers bind in a sequential fashion forming a multimeric L10(L12)X complex.

In terms of biological role, forms part of the ribosomal stalk, playing a central role in the interaction of the ribosome with GTP-bound translation factors. This is Large ribosomal subunit protein uL10 from Burkholderia lata (strain ATCC 17760 / DSM 23089 / LMG 22485 / NCIMB 9086 / R18194 / 383).